The sequence spans 313 residues: Olfactory receptor 8B3 (313 aa).

Topologically, residues 1–25 are extracellular; it reads MLARNNSLVTEFILAGLTDHPEFQQ. Asparagine 5 is a glycosylation site (N-linked (GlcNAc...) asparagine). A helical membrane pass occupies residues 26-46; it reads PLFFLFLVVYIVTMVGNLGLI. Residues 47 to 54 are Cytoplasmic-facing; that stretch reads ILFGLNSH. A helical transmembrane segment spans residues 55–75; sequence LHTPMYYFLFNLSFIDLCYSS. Residues 76–99 lie on the Extracellular side of the membrane; that stretch reads VFTPKMLMNFVSKKNIISYVGCMT. A disulfide bridge connects residues cysteine 97 and cysteine 189. The helical transmembrane segment at 100-120 threads the bilayer; sequence QLFFFLFFVISECYMLTSMAY. Residues 121–139 are Cytoplasmic-facing; the sequence is DRYVAICNPLLYKVTMSHQ. Residues 140–160 form a helical membrane-spanning segment; that stretch reads VCSMLTFAAYIMGLAGATAHT. The Extracellular segment spans residues 161–197; it reads GCMLRLTFCSANIINHYLCDILPLLQLSCTSTYVNEV. The helical transmembrane segment at 198 to 217 threads the bilayer; the sequence is VVLIVVGINIMVPSCTILIS. The Cytoplasmic segment spans residues 218 to 237; the sequence is YVFIVTSILHIKSTQGRSKA. Residues 238 to 258 traverse the membrane as a helical segment; the sequence is FSTCSSHVIALSLFFGSAAFM. Over 259-270 the chain is Extracellular; the sequence is YIKYSSGSMEQG. Residues 271-291 form a helical membrane-spanning segment; sequence KVSSVFYTNVVPMLNPLIYSL. The Cytoplasmic segment spans residues 292–313; that stretch reads RNKDVKVALRKALIKIQRRNIF.

This sequence belongs to the G-protein coupled receptor 1 family.

The protein resides in the cell membrane. Functionally, odorant receptor. The sequence is that of Olfactory receptor 8B3 (OR8B3) from Homo sapiens (Human).